The following is a 268-amino-acid chain: Putative hydro-lyase ABSDF2257 (268 aa).

The protein belongs to the D-glutamate cyclase family.

This is Putative hydro-lyase ABSDF2257 from Acinetobacter baumannii (strain SDF).